A 148-amino-acid polypeptide reads, in one-letter code: METVSAVNQTLPISGGEPVKFTTYSAAVHKVLVMINAGILGLLQLVSQQSSVLETHKAAFLCFCVFILFYAVLRVREAMDVRLQPGLVPRLIGHGSHLFGGLAALVLVSVVSTAFSIVLFLLWFIWLSAVVYLETNKPSACPPQLPPV.

The Cytoplasmic segment spans residues 1 to 25 (METVSAVNQTLPISGGEPVKFTTYS). Residues 26-46 (AAVHKVLVMINAGILGLLQLV) form a helical membrane-spanning segment. Topologically, residues 47 to 51 (SQQSS) are lumenal. A helical membrane pass occupies residues 52–72 (VLETHKAAFLCFCVFILFYAV). Residues 73–90 (LRVREAMDVRLQPGLVPR) lie on the Cytoplasmic side of the membrane. The helical transmembrane segment at 91 to 110 (LIGHGSHLFGGLAALVLVSV) threads the bilayer. The Lumenal portion of the chain corresponds to 111 to 116 (VSTAFS). The helical transmembrane segment at 117–133 (IVLFLLWFIWLSAVVYL) threads the bilayer. The Cytoplasmic segment spans residues 134–148 (ETNKPSACPPQLPPV).

Forms pentamers with a central pore to produce an ion channel.

Its subcellular location is the endoplasmic reticulum membrane. The catalysed reaction is Ca(2+)(in) = Ca(2+)(out). It carries out the reaction Na(+)(in) = Na(+)(out). Its function is as follows. Calcium-permeable cation-selective channel conferring a broad-spectrum clubroot resistance by supporting cytosolic Ca(2+) increase in root pericycle cells. Triggers immunity toward fungal pathogens such as Plasmodiophora brassicae (Pb) and induces defenses. Also permeable to sodium ion Na(+) and possibly other cations. This is Calcium-permeable cation-selective channel WeiTsing from Arabidopsis thaliana (Mouse-ear cress).